A 233-amino-acid chain; its full sequence is Glucosamine-6-phosphate deaminase (233 aa).

Asp62 acts as the Proton acceptor; for enolization step in catalysis. Asn128 acts as the For ring-opening step in catalysis. His130 acts as the Proton acceptor; for ring-opening step in catalysis. Glu135 serves as the catalytic For ring-opening step.

This sequence belongs to the glucosamine/galactosamine-6-phosphate isomerase family. NagB subfamily.

It catalyses the reaction alpha-D-glucosamine 6-phosphate + H2O = beta-D-fructose 6-phosphate + NH4(+). It participates in amino-sugar metabolism; N-acetylneuraminate degradation; D-fructose 6-phosphate from N-acetylneuraminate: step 5/5. In terms of biological role, catalyzes the reversible isomerization-deamination of glucosamine 6-phosphate (GlcN6P) to form fructose 6-phosphate (Fru6P) and ammonium ion. This chain is Glucosamine-6-phosphate deaminase, found in Leuconostoc citreum (strain KM20).